The chain runs to 207 residues: Small ribosomal subunit protein uS4 (207 aa).

Basic and acidic residues predominate over residues 29-38; the sequence is QDKAKFDSKP. The segment at 29–54 is disordered; sequence QDKAKFDSKPGQHGRTSGQRTSDYGL. Residues 42–52 are compositionally biased toward polar residues; sequence GRTSGQRTSDY. Residues 97–160 enclose the S4 RNA-binding domain; the sequence is SRLDNVVYRM…KKQTRIAEAL (64 aa).

Belongs to the universal ribosomal protein uS4 family. In terms of assembly, part of the 30S ribosomal subunit. Contacts protein S5. The interaction surface between S4 and S5 is involved in control of translational fidelity.

Functionally, one of the primary rRNA binding proteins, it binds directly to 16S rRNA where it nucleates assembly of the body of the 30S subunit. Its function is as follows. With S5 and S12 plays an important role in translational accuracy. This Variovorax paradoxus (strain S110) protein is Small ribosomal subunit protein uS4.